Reading from the N-terminus, the 430-residue chain is ATP-dependent RNA helicase cgh-1 (430 aa).

A Q motif motif is present at residues 43-71 (VEFEDFCLGRDLLMGIFEKGWEKPSPIQE). In terms of domain architecture, Helicase ATP-binding spans 74 to 244 (IGVALTGQDI…QKHMHKPYEI (171 aa)). 87 to 94 (AKNGTGKT) provides a ligand contact to ATP. The DEAD box signature appears at 192-195 (DEAD). The Helicase C-terminal domain occupies 254–414 (GVTQYYAFVQ…PIPKTVDPKL (161 aa)).

This sequence belongs to the DEAD box helicase family. DDX6/DHH1 subfamily. As to quaternary structure, interacts with car-1 in a germline ribonucleoprotein complex. Interacts with ifet-1. Interacts with oma-1, which is a component of a ribonucleoprotein complex, in an RNA-dependent manner. In terms of tissue distribution, expression is restricted to two germline precursors Z2 and Z3 in L1 stage hermaphrodites, and is detectable specifically in the gonad at low levels into the L3 stage. Expression is significantly higher during the early L4 stage. In adults, expression remains gonad-specific and was not apparent in the somatically derived uterus. Expressed in germ granules (P granules); when associated with pgl-1.

It localises to the cytoplasm. It carries out the reaction ATP + H2O = ADP + phosphate + H(+). Its function is as follows. Probable RNA helicase required for oocyte and sperm function. Also required to prevent the physiological germline apoptosis mechanism killing essentially all developing oocytes. This chain is ATP-dependent RNA helicase cgh-1 (cgh-1), found in Caenorhabditis elegans.